Reading from the N-terminus, the 298-residue chain is ADP/ATP translocase 1 (298 aa).

Topologically, residues 1-7 (MSDQALS) are mitochondrial intermembrane. The residue at position 2 (Ser2) is an N-acetylserine. The stretch at 6–98 (LSFLKDFLAG…FAFKDKYKQI (93 aa)) is one Solcar 1 repeat. Ser7 bears the Phosphoserine mark. The chain crosses the membrane as a helical span at residues 8–37 (FLKDFLAGGVAAAISKTAVAPIERVKLLLQ). Residues 38-74 (VQHASKQISAEKQYKGIIDCVVRIPKEQGFLSFWRGN) lie on the Mitochondrial matrix side of the membrane. Residue Lys52 is modified to N6,N6,N6-trimethyllysine. Lys52 is subject to N6-methyllysine. Residues 75-99 (LANVIRYFPTQALNFAFKDKYKQIF) form a helical membrane-spanning segment. Arg80 and Lys92 together coordinate ADP. At 100 to 109 (LGGVDRHKQF) the chain is on the mitochondrial intermembrane side. The chain crosses the membrane as a helical span at residues 110–130 (WRYFAGNLASGGAAGATSLCF). 2 Solcar repeats span residues 111-201 (RYFA…AKGM) and 212-297 (VSWM…IKKF). Residues 131–178 (VYPLDFARTRLAADVGKGAAQREFTGLGNCITKIFKSDGLRGLYQGFN) are Mitochondrial matrix-facing. Lys147 is modified (N6-succinyllysine). Residue Cys160 is modified to S-nitrosocysteine. Residues 179–199 (VSVQGIIIYRAAYFGVYDTAK) form a helical membrane-spanning segment. At 200 to 210 (GMLPDPKNVHI) the chain is on the mitochondrial intermembrane side. A helical transmembrane segment spans residues 211–231 (IVSWMIAQTVTAVAGLVSYPF). Residues 232 to 273 (DTVRRRMMMQSGRKGADIMYTGTVDCWRKIAKDEGPKAFFKG) are Mitochondrial matrix-facing. Position 235 (Arg235) interacts with ADP. The interval 235-240 (RRRMMM) is important for transport activity. The Nucleotide carrier signature motif motif lies at 235-240 (RRRMMM). Residues Lys245 and Lys272 each carry the N6-succinyllysine modification. A helical transmembrane segment spans residues 274-291 (AWSNVLRGMGGAFVLVLY). The Mitochondrial intermembrane portion of the chain corresponds to 292–298 (DEIKKFV).

Belongs to the mitochondrial carrier (TC 2.A.29) family. In terms of assembly, monomer. Found in a complex with ARL2, ARL2BP and SLC25A4/ANT1. Interacts with ARL2BP. Interacts with TIMM44; leading to inhibit the presequence translocase TIMM23, thereby promoting stabilization of PINK1. Post-translationally, under cell death induction, transglutaminated by TGM2. Transglutamination leads to formation of covalent cross-links between a glutamine and the epsilon-amino group of a lysine residue, forming polymers. As to expression, detected in heart muscle (at protein level). Detected in heart.

It is found in the mitochondrion inner membrane. It localises to the membrane. The enzyme catalyses ADP(in) + ATP(out) = ADP(out) + ATP(in). It catalyses the reaction H(+)(in) = H(+)(out). The matrix-open state (m-state) is inhibited by the membrane-permeable bongkrekic acid (BKA). The cytoplasmic-open state (c-state) is inhibited by the membrane-impermeable toxic inhibitor carboxyatractyloside (CATR). Proton transporter activity is inhibited by ADP:ATP antiporter activity. Functionally, ADP:ATP antiporter that mediates import of ADP into the mitochondrial matrix for ATP synthesis, and export of ATP out to fuel the cell. Cycles between the cytoplasmic-open state (c-state) and the matrix-open state (m-state): operates by the alternating access mechanism with a single substrate-binding site intermittently exposed to either the cytosolic (c-state) or matrix (m-state) side of the inner mitochondrial membrane. In addition to its ADP:ATP antiporter activity, also involved in mitochondrial uncoupling and mitochondrial permeability transition pore (mPTP) activity. Plays a role in mitochondrial uncoupling by acting as a proton transporter: proton transport uncouples the proton flows via the electron transport chain and ATP synthase to reduce the efficiency of ATP production and cause mitochondrial thermogenesis. Proton transporter activity is inhibited by ADP:ATP antiporter activity, suggesting that SLC25A4/ANT1 acts as a master regulator of mitochondrial energy output by maintaining a delicate balance between ATP production (ADP:ATP antiporter activity) and thermogenesis (proton transporter activity). Proton transporter activity requires free fatty acids as cofactor, but does not transport it. Probably mediates mitochondrial uncoupling in tissues that do not express UCP1. Also plays a key role in mPTP opening, a non-specific pore that enables free passage of the mitochondrial membranes to solutes of up to 1.5 kDa, and which contributes to cell death. It is however unclear if SLC25A4/ANT1 constitutes a pore-forming component of mPTP or regulates it. Acts as a regulator of mitophagy independently of ADP:ATP antiporter activity: promotes mitophagy via interaction with TIMM44, leading to inhibit the presequence translocase TIMM23, thereby promoting stabilization of PINK1. In Bos taurus (Bovine), this protein is ADP/ATP translocase 1.